The sequence spans 188 residues: MSIMSDNWIKKMAESKNMISPFVDKQVRARNNQQILSYGLSSYGYDARVSNEFKIFTNTKPSIIDPKKFDQDCLITKISDICIIPPNSFALGTTIEYFKMPRDVIAICIGKSTYARCGIIINVTPLEPECEGHITLEFSNTTPLPAKIYAGEGACQFLFFKGDQPCNTSYLDRYGRYTKQIGVTLPTV.

DCTP contacts are provided by residues 111-116 (KSTYAR), 135-137 (TLE), Gln156, Tyr170, Lys179, and Gln180. Glu137 acts as the Proton donor/acceptor in catalysis.

The protein belongs to the dCTP deaminase family. In terms of assembly, homotrimer.

The enzyme catalyses dCTP + H2O + H(+) = dUTP + NH4(+). The protein operates within pyrimidine metabolism; dUMP biosynthesis; dUMP from dCTP (dUTP route): step 1/2. In terms of biological role, catalyzes the deamination of dCTP to dUTP. The chain is dCTP deaminase from Orientia tsutsugamushi (strain Boryong) (Rickettsia tsutsugamushi).